A 526-amino-acid chain; its full sequence is Adenylosuccinate synthetase (526 aa).

GTP is bound by residues 102-108 and 130-132; these read GDEGKGK and GHT. The Proton acceptor role is filled by D103. Mg(2+) is bound by residues D103 and G130. IMP contacts are provided by residues 103 to 106, 128 to 131, T219, R233, N310, T325, and R392; these read DEGK and NAGH. H131 (proton donor) is an active-site residue. 388–394 contributes to the substrate binding site; the sequence is TTTGRTR. GTP contacts are provided by residues R394, 420–422, and 502–504; these read KVD and GVG.

The protein belongs to the adenylosuccinate synthetase family. Homodimer. Requires Mg(2+) as cofactor.

The protein localises to the cytoplasm. The enzyme catalyses IMP + L-aspartate + GTP = N(6)-(1,2-dicarboxyethyl)-AMP + GDP + phosphate + 2 H(+). It functions in the pathway purine metabolism; AMP biosynthesis via de novo pathway; AMP from IMP: step 1/2. Functionally, plays an important role in the de novo pathway and in the salvage pathway of purine nucleotide biosynthesis. Catalyzes the first committed step in the biosynthesis of AMP from IMP. This chain is Adenylosuccinate synthetase, found in Phaeodactylum tricornutum (strain CCAP 1055/1).